We begin with the raw amino-acid sequence, 551 residues long: NAD(P)H-quinone oxidoreductase chain 4 (551 aa).

Helical transmembrane passes span 25–45 (FPWL…VPFI), 56–76 (WFAL…YLNG), 111–131 (LILL…PVTF), 133–153 (PKLF…VFAV), 157–177 (LLFF…LAIW), 189–209 (FILY…AMGF), 233–253 (LLCY…VPLH), 264–284 (TAPV…YALM), 298–318 (FAPL…LTSF), 335–355 (MGFV…GAML), 356–376 (QMIS…ATYD), 397–417 (FALW…SGFV), 438–458 (IVID…LLSM), and 485–505 (VYII…PRLM).

Belongs to the complex I subunit 4 family.

Its subcellular location is the cellular thylakoid membrane. The enzyme catalyses a plastoquinone + NADH + (n+1) H(+)(in) = a plastoquinol + NAD(+) + n H(+)(out). It catalyses the reaction a plastoquinone + NADPH + (n+1) H(+)(in) = a plastoquinol + NADP(+) + n H(+)(out). NDH-1 shuttles electrons from NAD(P)H, via FMN and iron-sulfur (Fe-S) centers, to quinones in the respiratory chain. The immediate electron acceptor for the enzyme in this species is believed to be plastoquinone. Couples the redox reaction to proton translocation (for every two electrons transferred, four hydrogen ions are translocated across the cytoplasmic membrane), and thus conserves the redox energy in a proton gradient. The chain is NAD(P)H-quinone oxidoreductase chain 4 from Synechococcus sp. (strain WH7803).